The primary structure comprises 172 residues: Xanthine-guanine phosphoribosyltransferase (172 aa).

5-phospho-alpha-D-ribose 1-diphosphate contacts are provided by residues 47-48 and 106-114; these read RG and DDLVDTGKT. D107 contacts Mg(2+). Guanine contacts are provided by D110 and I153. D110 and I153 together coordinate xanthine. GMP contacts are provided by residues 110–114 and 152–153; these read DTGKT and WI.

The protein belongs to the purine/pyrimidine phosphoribosyltransferase family. XGPT subfamily. Homotetramer. Mg(2+) is required as a cofactor.

Its subcellular location is the cell inner membrane. It catalyses the reaction GMP + diphosphate = guanine + 5-phospho-alpha-D-ribose 1-diphosphate. It carries out the reaction XMP + diphosphate = xanthine + 5-phospho-alpha-D-ribose 1-diphosphate. The catalysed reaction is IMP + diphosphate = hypoxanthine + 5-phospho-alpha-D-ribose 1-diphosphate. The protein operates within purine metabolism; GMP biosynthesis via salvage pathway; GMP from guanine: step 1/1. It functions in the pathway purine metabolism; XMP biosynthesis via salvage pathway; XMP from xanthine: step 1/1. Functionally, purine salvage pathway enzyme that catalyzes the transfer of the ribosyl-5-phosphate group from 5-phospho-alpha-D-ribose 1-diphosphate (PRPP) to the N9 position of the 6-oxopurines guanine and xanthine to form the corresponding ribonucleotides GMP (guanosine 5'-monophosphate) and XMP (xanthosine 5'-monophosphate), with the release of PPi. To a lesser extent, also acts on hypoxanthine. This is Xanthine-guanine phosphoribosyltransferase from Rhodopseudomonas palustris (strain HaA2).